A 219-amino-acid chain; its full sequence is Protein DCL homolog, chloroplastic (219 aa).

A chloroplast-targeting transit peptide spans 1-48 (MSLASIPSSSPVASPYFRCRTYIFSFSSSPLCLYFPRGDSTSLRPRVR). Positions 70-96 (LRRPRIASEESSEEEEEEEEENSEGDE) are disordered. Residues 79–96 (ESSEEEEEEEEENSEGDE) show a composition bias toward acidic residues.

As to expression, expressed in leaves, stems, flowers and siliques.

It localises to the plastid. Its subcellular location is the chloroplast. In terms of biological role, required for normal plastid function and plant development. Required for correct plastid ribosome assembly. Required for processing and maturation of 4.5S rRNA. In Arabidopsis thaliana (Mouse-ear cress), this protein is Protein DCL homolog, chloroplastic.